Here is an 84-residue protein sequence, read N- to C-terminus: Apovitellenin-1 (84 aa).

The protein belongs to the apovitellenin family. As to quaternary structure, monomer.

Functionally, protein component of the very low density lipoprotein (VLDL) of egg-laying females. Potent lipoprotein lipase inhibitor, preventing the loss of triglycerides from VLDL on their way from the liver to the growing oocytes. The protein is Apovitellenin-1 of Dromaius novaehollandiae (Emu).